The following is a 38-amino-acid chain: MKVRASVKKLCRNCKIVKRNGVVRVICSAEPKHKQRQG.

It belongs to the bacterial ribosomal protein bL36 family.

The chain is Large ribosomal subunit protein bL36A from Pectobacterium atrosepticum (strain SCRI 1043 / ATCC BAA-672) (Erwinia carotovora subsp. atroseptica).